Consider the following 586-residue polypeptide: Protein translocase subunit SecD (586 aa).

The next 6 helical transmembrane spans lie at 7–27, 418–438, 439–459, 465–485, 521–541, and 546–566; these read LILILLVTFFACLLIFPTLKW, SALALCLVFLFICVYYGLSGV, VAGFSLVIYNVFLILAILSAF, LTSIAGLILTMGMAVDINIVI, TFIAVLFLTLLGTGVIQGFAW, and GIVASLFSSLIFSRFILEFII.

Belongs to the SecD/SecF family. SecD subfamily. As to quaternary structure, forms a complex with SecF. Part of the essential Sec protein translocation apparatus which comprises SecA, SecYEG and auxiliary proteins SecDF. Other proteins may also be involved.

Its subcellular location is the cell inner membrane. Functionally, part of the Sec protein translocase complex. Interacts with the SecYEG preprotein conducting channel. SecDF uses the proton motive force (PMF) to complete protein translocation after the ATP-dependent function of SecA. This chain is Protein translocase subunit SecD, found in Borreliella burgdorferi (strain ATCC 35210 / DSM 4680 / CIP 102532 / B31) (Borrelia burgdorferi).